The primary structure comprises 185 residues: Pro-adrenomedullin (185 aa).

Residues 1–21 (MKLVSVALMYLGSLAFLGADT) form the signal peptide. Arginine amide is present on arginine 41. A propeptide spanning residues 45–92 (ELRMSSSYPTGLADVKAGPAQTLIRPQDMKGASRSPEDSSPDAARIRV) is cleaved from the precursor. Positions 60 to 87 (KAGPAQTLIRPQDMKGASRSPEDSSPDA) are disordered. An intrachain disulfide couples cysteine 110 to cysteine 115. The disordered stretch occupies residues 133-185 (DNVAPRSKISPQGYGRRRRRSLPEAGPGRTLVSSKPQAHGAPAPPSGSAPHFL). At tyrosine 146 the chain carries Tyrosine amide. Residues 148–185 (RRRRRSLPEAGPGRTLVSSKPQAHGAPAPPSGSAPHFL) constitute a propeptide, preproAM C-terminal fragment.

The protein belongs to the adrenomedullin family. As to expression, highest levels found in pheochromocytoma and adrenal medulla. Also found in lung, ventricle and kidney tissues.

It is found in the secreted. Adrenomedullin/ADM and proadrenomedullin N-20 terminal peptide/PAMP are peptide hormones that act as potent hypotensive and vasodilatator agents. Numerous actions have been reported most related to the physiologic control of fluid and electrolyte homeostasis. In the kidney, ADM is diuretic and natriuretic, and both ADM and PAMP inhibit aldosterone secretion by direct adrenal actions. In pituitary gland, both peptides at physiologically relevant doses inhibit basal ACTH secretion. Both peptides appear to act in brain and pituitary gland to facilitate the loss of plasma volume, actions which complement their hypotensive effects in blood vessels. Its function is as follows. ADM function is mediated by the CALCRL-RAMP2 and CALCRL-RAMP3 receptor complexes with ADM showing the highest potency for the CALCRL-RAMP2 complex. The protein is Pro-adrenomedullin of Homo sapiens (Human).